An 804-amino-acid chain; its full sequence is Protein-lysine N-methyltransferase SMYD4 (804 aa).

112 to 114 (RSA) is a binding site for S-adenosyl-L-methionine. An SET domain is found at 233 to 574 (SSIGLCVDPL…KGQEILHCYG (342 aa)). Residues Cys-296, Cys-299, Cys-309, Cys-312, Cys-318, Cys-322, His-331, and Cys-335 each contribute to the Zn(2+) site. The MYND-type zinc finger occupies 296–335 (CHRCLKHTLATVPCDGCSYAKYCSQECLQQAWELYHRTEC). Residues Asn-427, 539 to 540 (NH), Tyr-573, and Phe-595 each bind S-adenosyl-L-methionine.

The protein belongs to the class V-like SAM-binding methyltransferase superfamily. In terms of assembly, interacts (via MYND-type zinc finger) with HDAC1.

It is found in the nucleus. The protein localises to the cytoplasm. The enzyme catalyses L-lysyl-[protein] + S-adenosyl-L-methionine = N(6)-methyl-L-lysyl-[protein] + S-adenosyl-L-homocysteine + H(+). In terms of biological role, protein-lysine N-methyltransferase. Monomethylates PRMT5, modulating its transcriptional activity. May also act as a histone methyltransferase. Plays a critical role in cardiac development. Acts as a key epigenetic regulator of gene expression during cardiac development via its dual activities as a methyltransferase and negative regulator of HDAC1. The sequence is that of Protein-lysine N-methyltransferase SMYD4 from Homo sapiens (Human).